The chain runs to 282 residues: Short-chain dehydrogenase/reductase prx7 (282 aa).

Positions 23, 70, 150, 154, 183, and 185 each coordinate NADP(+). Tyr-150 (proton acceptor) is an active-site residue. Lys-154 acts as the Lowers pKa of active site Tyr in catalysis.

The protein belongs to the short-chain dehydrogenases/reductases (SDR) family.

The protein operates within sesquiterpene biosynthesis. Functionally, short-chain dehydrogenase/reductase; part of the gene cluster that mediates the biosynthesis of PR-toxin, a bicyclic sesquiterpene belonging to the eremophilane class and acting as a mycotoxin. The first step of the pathway is catalyzed by the aristolochene synthase which performs the cyclization of trans,trans-farnesyl diphosphate (FPP) to the bicyclic sesquiterpene aristolochene. Following the formation of aristolochene, the non-oxygenated aristolochene is converted to the trioxygenated intermediate eremofortin B, via 7-epi-neopetasone. This conversion appears to involve three enzymes, a hydroxysterol oxidase-like enzyme, the quinone-oxidase prx3 that forms the quinone-type-structure in the bicyclic nucleus of aristolochene with the C8-oxo group and the C-3 hydroxyl group, and the P450 monooxygenase prx9 that introduces the epoxide at the double bond between carbons 1 and 2. No monoxy or dioxy-intermediates have been reported to be released to the broth, so these three early oxidative reactions may be coupled together. Eremofortin B is further oxidized by another P450 monooxygenase, that introduces a second epoxide between carbons 7 and 11 prior to acetylation to eremofortin A by the acetyltransferase prx11. The second epoxidation may be performed by a second P450 monooxygenase. After the acetylation step, eremofortin A is converted to eremofortin C and then to PR-toxin. First the conversion of eremofortin A to eremofortin C proceeds by oxidation of the side chain of the molecule at C-12 and is catalyzed by the short-chain oxidoreductase prx1. The cytochrome P450 monooxygenase prx8 also plays a role in this step. The primary alcohol formed at C-12 is finally oxidized by the short-chain alcohol dehydrogenase prx4 that forms PR-toxin. The polypeptide is Short-chain dehydrogenase/reductase prx7 (Penicillium rubens (strain ATCC 28089 / DSM 1075 / NRRL 1951 / Wisconsin 54-1255) (Penicillium chrysogenum)).